Consider the following 202-residue polypeptide: Peptidyl-tRNA hydrolase (202 aa).

Y16 lines the tRNA pocket. The active-site Proton acceptor is H21. TRNA contacts are provided by Y68, N70, and N116.

This sequence belongs to the PTH family. Monomer.

It localises to the cytoplasm. The catalysed reaction is an N-acyl-L-alpha-aminoacyl-tRNA + H2O = an N-acyl-L-amino acid + a tRNA + H(+). Functionally, hydrolyzes ribosome-free peptidyl-tRNAs (with 1 or more amino acids incorporated), which drop off the ribosome during protein synthesis, or as a result of ribosome stalling. Its function is as follows. Catalyzes the release of premature peptidyl moieties from peptidyl-tRNA molecules trapped in stalled 50S ribosomal subunits, and thus maintains levels of free tRNAs and 50S ribosomes. The sequence is that of Peptidyl-tRNA hydrolase from Treponema pallidum (strain Nichols).